The chain runs to 177 residues: Large ribosomal subunit protein uL5 (177 aa).

It belongs to the universal ribosomal protein uL5 family. In terms of assembly, part of the 50S ribosomal subunit. Interacts with protein L18 and the 5S rRNA, and probably with tRNAs. Forms a bridge to the 30S subunit in the 70S ribosome.

This is 1 of 5 proteins that mediates the attachment of the 5S rRNA onto the large ribosomal subunit, stabilizing the orientation of adjacent RNA domains. Forms part of the central protuberance. Modeling places the A and P site tRNAs in close proximity to this protein; the 5S rRNA and some of its associated proteins might help stabilize positioning of ribosome-bound tRNAs. In the 70S ribosome it is thought to contact protein S13 of the 30S subunit (bridge B1b), connecting the 2 subunits; this bridge is implicated in subunit movement. The polypeptide is Large ribosomal subunit protein uL5 (rpl5) (Haloarcula marismortui (strain ATCC 43049 / DSM 3752 / JCM 8966 / VKM B-1809) (Halobacterium marismortui)).